A 124-amino-acid chain; its full sequence is Small ribosomal subunit protein uS12c (124 aa).

The interval 104–124 (SGGVKDRTQRRSKYGVKKPKS) is disordered. Positions 113–124 (RRSKYGVKKPKS) are enriched in basic residues.

Belongs to the universal ribosomal protein uS12 family. Part of the 30S ribosomal subunit.

Its subcellular location is the plastid. It localises to the chloroplast. In terms of biological role, with S4 and S5 plays an important role in translational accuracy. Located at the interface of the 30S and 50S subunits. This Thalassiosira pseudonana (Marine diatom) protein is Small ribosomal subunit protein uS12c (rps12).